A 251-amino-acid polypeptide reads, in one-letter code: Small ribosomal subunit protein uS2 (251 aa).

This sequence belongs to the universal ribosomal protein uS2 family.

The chain is Small ribosomal subunit protein uS2 from Deinococcus deserti (strain DSM 17065 / CIP 109153 / LMG 22923 / VCD115).